Reading from the N-terminus, the 160-residue chain is MAIEKKPDLSDPKLRAKLAQGMGHNYYGEPAWPNDLLYVFPVVILGTIGLLVGLAVLDPALIGEPADPFATPLEILPEWYLYPVFQILRVLPNKLLGIACQGAIPLGLLLVPFIESVNKFQNPFRRPIATAVFLFGTVVTIWLGAGATFPIDESLTLGLF.

A run of 3 helical transmembrane segments spans residues 36-56, 95-115, and 131-151; these read LLYVFPVVILGTIGLLVGLAV, LLGIACQGAIPLGLLLVPFIE, and AVFLFGTVVTIWLGAGATFPI.

The protein belongs to the cytochrome b family. PetD subfamily. As to quaternary structure, the 4 large subunits of the cytochrome b6-f complex are cytochrome b6, subunit IV (17 kDa polypeptide, PetD), cytochrome f and the Rieske protein, while the 4 small subunits are PetG, PetL, PetM and PetN. The complex functions as a dimer.

It localises to the cellular thylakoid membrane. In terms of biological role, component of the cytochrome b6-f complex, which mediates electron transfer between photosystem II (PSII) and photosystem I (PSI), cyclic electron flow around PSI, and state transitions. This Crocosphaera subtropica (strain ATCC 51142 / BH68) (Cyanothece sp. (strain ATCC 51142)) protein is Cytochrome b6-f complex subunit 4.